A 42-amino-acid chain; its full sequence is Large ribosomal subunit protein bL36 (42 aa).

Belongs to the bacterial ribosomal protein bL36 family.

The chain is Large ribosomal subunit protein bL36 from Wolbachia sp. subsp. Brugia malayi (strain TRS).